Consider the following 188-residue polypeptide: MKALKERILRDGKCFEGGILKVDNFINHQMDPILMKSIAVEFVRRFASTNINKVMTIEASGIAPAIMVGYLLELPVVFAKKKKPVTMENMLTTSVYSFTKDRSYDVCVSKDFLSKGDRVLFIDDFLANGNAAKGIIDLVEKAGAELSGMGFIIEKAFQHGGDYLRNAGIRVESLAIIESLDNCEIKIR.

Positions 20 and 27 each coordinate xanthine. 127–131 contacts 5-phospho-alpha-D-ribose 1-diphosphate; sequence ANGNA. A xanthine-binding site is contributed by lysine 155.

This sequence belongs to the purine/pyrimidine phosphoribosyltransferase family. Xpt subfamily. Homodimer.

The protein resides in the cytoplasm. It carries out the reaction XMP + diphosphate = xanthine + 5-phospho-alpha-D-ribose 1-diphosphate. The protein operates within purine metabolism; XMP biosynthesis via salvage pathway; XMP from xanthine: step 1/1. Its function is as follows. Converts the preformed base xanthine, a product of nucleic acid breakdown, to xanthosine 5'-monophosphate (XMP), so it can be reused for RNA or DNA synthesis. This is Xanthine phosphoribosyltransferase from Phocaeicola vulgatus (strain ATCC 8482 / DSM 1447 / JCM 5826 / CCUG 4940 / NBRC 14291 / NCTC 11154) (Bacteroides vulgatus).